A 298-amino-acid chain; its full sequence is Homoserine kinase (298 aa).

92–102 (PLARGLGSSAT) serves as a coordination point for ATP.

Belongs to the GHMP kinase family. Homoserine kinase subfamily.

It localises to the cytoplasm. The catalysed reaction is L-homoserine + ATP = O-phospho-L-homoserine + ADP + H(+). It participates in amino-acid biosynthesis; L-threonine biosynthesis; L-threonine from L-aspartate: step 4/5. Catalyzes the ATP-dependent phosphorylation of L-homoserine to L-homoserine phosphate. The protein is Homoserine kinase (thrB) of Nostoc sp. (strain PCC 7120 / SAG 25.82 / UTEX 2576).